The chain runs to 240 residues: UDP-2,3-diacylglucosamine hydrolase (240 aa).

5 residues coordinate Mn(2+): Asp8, His10, Asp41, Asn79, and His114. Residue 79-80 coordinates substrate; the sequence is NR. Substrate is bound by residues Asp122, Ser160, Asn164, Lys167, and His195. Residues His195 and His197 each contribute to the Mn(2+) site.

This sequence belongs to the LpxH family. Mn(2+) is required as a cofactor.

It is found in the cell inner membrane. It catalyses the reaction UDP-2-N,3-O-bis[(3R)-3-hydroxytetradecanoyl]-alpha-D-glucosamine + H2O = 2-N,3-O-bis[(3R)-3-hydroxytetradecanoyl]-alpha-D-glucosaminyl 1-phosphate + UMP + 2 H(+). It participates in glycolipid biosynthesis; lipid IV(A) biosynthesis; lipid IV(A) from (3R)-3-hydroxytetradecanoyl-[acyl-carrier-protein] and UDP-N-acetyl-alpha-D-glucosamine: step 4/6. Its function is as follows. Hydrolyzes the pyrophosphate bond of UDP-2,3-diacylglucosamine to yield 2,3-diacylglucosamine 1-phosphate (lipid X) and UMP by catalyzing the attack of water at the alpha-P atom. Involved in the biosynthesis of lipid A, a phosphorylated glycolipid that anchors the lipopolysaccharide to the outer membrane of the cell. The protein is UDP-2,3-diacylglucosamine hydrolase of Escherichia coli (strain SE11).